The chain runs to 353 residues: Photosystem II protein D1 (353 aa).

Threonine 2 carries the post-translational modification N-acetylthreonine. Threonine 2 carries the post-translational modification Phosphothreonine. Helical transmembrane passes span 29–46 (YIGW…TATS), 118–133 (HFLL…EWEL), and 142–156 (WIAI…AATA). Histidine 118 serves as a coordination point for chlorophyll a. Tyrosine 126 is a binding site for pheophytin a. Aspartate 170 and glutamate 189 together coordinate [CaMn4O5] cluster. Residues 197–218 (FHMLGVAGVFGGSLFSAMHGSL) traverse the membrane as a helical segment. Histidine 198 is a binding site for chlorophyll a. Residues histidine 215 and 264 to 265 (SF) each bind a quinone. Histidine 215 contacts Fe cation. Histidine 272 serves as a coordination point for Fe cation. Residues 274–288 (FLAAWPVIGIWFTAL) traverse the membrane as a helical segment. [CaMn4O5] cluster contacts are provided by histidine 332, glutamate 333, aspartate 342, and alanine 344. A propeptide spanning residues 345 to 353 (TFEVSATNA) is cleaved from the precursor.

The protein belongs to the reaction center PufL/M/PsbA/D family. In terms of assembly, PSII is composed of 1 copy each of membrane proteins PsbA, PsbB, PsbC, PsbD, PsbE, PsbF, PsbH, PsbI, PsbJ, PsbK, PsbL, PsbM, PsbT, PsbX, PsbY, PsbZ, Psb30/Ycf12, at least 3 peripheral proteins of the oxygen-evolving complex and a large number of cofactors. It forms dimeric complexes. The cofactor is The D1/D2 heterodimer binds P680, chlorophylls that are the primary electron donor of PSII, and subsequent electron acceptors. It shares a non-heme iron and each subunit binds pheophytin, quinone, additional chlorophylls, carotenoids and lipids. D1 provides most of the ligands for the Mn4-Ca-O5 cluster of the oxygen-evolving complex (OEC). There is also a Cl(-1) ion associated with D1 and D2, which is required for oxygen evolution. The PSII complex binds additional chlorophylls, carotenoids and specific lipids.. Post-translationally, tyr-161 forms a radical intermediate that is referred to as redox-active TyrZ, YZ or Y-Z. C-terminally processed by CTPA; processing is essential to allow assembly of the oxygen-evolving complex and thus photosynthetic growth.

The protein localises to the plastid membrane. It catalyses the reaction 2 a plastoquinone + 4 hnu + 2 H2O = 2 a plastoquinol + O2. Photosystem II (PSII) is a light-driven water:plastoquinone oxidoreductase that uses light energy to abstract electrons from H(2)O, generating O(2) and a proton gradient subsequently used for ATP formation. It consists of a core antenna complex that captures photons, and an electron transfer chain that converts photonic excitation into a charge separation. The D1/D2 (PsbA/PsbD) reaction center heterodimer binds P680, the primary electron donor of PSII as well as several subsequent electron acceptors. This chain is Photosystem II protein D1, found in Cuscuta gronovii (Common dodder).